Here is a 147-residue protein sequence, read N- to C-terminus: Deoxyuridine 5'-triphosphate nucleotidohydrolase (147 aa).

Substrate contacts are provided by residues 67 to 69 (RSG), N80, and 84 to 86 (LID).

Belongs to the dUTPase family. Mg(2+) is required as a cofactor.

It catalyses the reaction dUTP + H2O = dUMP + diphosphate + H(+). The protein operates within pyrimidine metabolism; dUMP biosynthesis; dUMP from dCTP (dUTP route): step 2/2. Its function is as follows. This enzyme is involved in nucleotide metabolism: it produces dUMP, the immediate precursor of thymidine nucleotides and it decreases the intracellular concentration of dUTP so that uracil cannot be incorporated into DNA. The protein is Deoxyuridine 5'-triphosphate nucleotidohydrolase of Gloeobacter violaceus (strain ATCC 29082 / PCC 7421).